A 148-amino-acid chain; its full sequence is MKEVSVPAIKRIVLIAHDNRKEDLVNWVKTHREILSKHQLYGTGTTGKLISEETELPVYRFLSGPLGGDQQIGAKIAEGDLDIVIFFWDPLTAQPHDPDVKALLRIAVLYNVPMACNRSTADYMISSPQFTKTYKKILLSYNTKVKKD.

An MGS-like domain is found at 4–148 (VSVPAIKRIV…LSYNTKVKKD (145 aa)). Substrate is bound by residues histidine 17, lysine 21, 43–46 (TGTT), and 63–64 (SG). Catalysis depends on aspartate 69, which acts as the Proton donor/acceptor. Histidine 96 contacts substrate.

Belongs to the methylglyoxal synthase family.

It catalyses the reaction dihydroxyacetone phosphate = methylglyoxal + phosphate. Catalyzes the formation of methylglyoxal from dihydroxyacetone phosphate. The protein is Methylglyoxal synthase of Leptospira interrogans serogroup Icterohaemorrhagiae serovar copenhageni (strain Fiocruz L1-130).